Consider the following 349-residue polypeptide: MERLTRLNHFLVNMRWDFYEGVIQAGYIRNLQRELDHTPAELLGSKLDLIFFRESLNLSTYVNNWYMQNLGVPGPVNFIEKYHDACFSNYMKLMEIPSPLDQFEIVPLIPMHIGNFYFSFTNSSLFMLLTLSFFLLLIHFVTKKGGGNLVPNAWQSLVELLYDFVLNLVKEQIGGLSGNVKQMFFPCILVTFLFLLFCNLQGMIPYSFTVTSHFLITLALSFSIFIGITIVGFQRHGLHFFSFLLPAGVPLPLAPFLVLLELISYCFRALSLGIRLFANMMAGHSLVKILSGFAWTMLCMNDIFYFIGALGPLFIVLALTGLELGVAILQAYVFTILICIYLNDAINLH.

A propeptide spanning residues 1-97 is cleaved from the precursor; that stretch reads MERLTRLNHF…SNYMKLMEIP (97 aa). The next 7 helical transmembrane spans lie at 118 to 138, 184 to 204, 213 to 233, 240 to 260, 280 to 300, 303 to 323, and 326 to 346; these read FSFT…LLLI, FFPC…QGMI, HFLI…IVGF, FFSF…LVLL, MMAG…MLCM, IFYF…TGLE, and VAIL…NDAI.

It belongs to the ATPase A chain family. In terms of assembly, F-type ATPases have 2 components, CF(1) - the catalytic core - and CF(0) - the membrane proton channel. CF(1) has five subunits: alpha(3), beta(3), gamma(1), delta(1), epsilon(1). CF(0) has three main subunits: a, b and c.

It localises to the mitochondrion inner membrane. Mitochondrial membrane ATP synthase (F(1)F(0) ATP synthase or Complex V) produces ATP from ADP in the presence of a proton gradient across the membrane which is generated by electron transport complexes of the respiratory chain. F-type ATPases consist of two structural domains, F(1) - containing the extramembraneous catalytic core and F(0) - containing the membrane proton channel, linked together by a central stalk and a peripheral stalk. During catalysis, ATP synthesis in the catalytic domain of F(1) is coupled via a rotary mechanism of the central stalk subunits to proton translocation. Key component of the proton channel; it may play a direct role in the translocation of protons across the membrane. In Arabidopsis thaliana (Mouse-ear cress), this protein is ATP synthase subunit a-2 (ATP6-2).